The chain runs to 146 residues: Microsomal glutathione S-transferase 2 (146 aa).

The next 3 helical transmembrane spans lie at 6-26 (ILLAALSVLSACQQSYFAMQV), 59-79 (FYPIFIITLWMAGWYFNQVFA), and 111-131 (SLGVLALLTVLGAVGILNSFL).

The protein belongs to the MAPEG family. In terms of assembly, homotrimer.

The protein resides in the endoplasmic reticulum membrane. It is found in the microsome membrane. It catalyses the reaction RX + glutathione = an S-substituted glutathione + a halide anion + H(+). It carries out the reaction 1-chloro-2,4-dinitrobenzene + glutathione = 2,4-dinitrophenyl-S-glutathione + chloride + H(+). The catalysed reaction is leukotriene C4 = leukotriene A4 + glutathione. The enzyme catalyses (5S)-hydroperoxy-(6E,8Z,11Z,14Z)-eicosatetraenoate + 2 glutathione = (5S)-hydroxy-(6E,8Z,11Z,14Z)-eicosatetraenoate + glutathione disulfide + H2O. With respect to regulation, each monomer binds on GSH molecule but only one subunit is catalytically active. Catalyzes several different glutathione-dependent reactions. Catalyzes the glutathione-dependent reduction of lipid hydroperoxides, such as 5-HPETE. Has glutathione transferase activity, toward xenobiotic electrophiles, such as 1-chloro-2, 4-dinitrobenzene (CDNB). Also catalyzes the conjugation of leukotriene A4 with reduced glutathione to form leukotriene C4 (LTC4). Involved in oxidative DNA damage induced by ER stress and anticancer agents by activating LTC4 biosynthetic machinery in nonimmune cells. The protein is Microsomal glutathione S-transferase 2 (MGST2) of Bos taurus (Bovine).